A 495-amino-acid polypeptide reads, in one-letter code: NADP/NAD-dependent aldehyde dehydrogenase PuuC (495 aa).

Residue 244–249 (GSTRTG) participates in NAD(+) binding. Active-site residues include E267 and C302.

The protein belongs to the aldehyde dehydrogenase family.

It carries out the reaction an aldehyde + NADP(+) + H2O = a carboxylate + NADPH + 2 H(+). The catalysed reaction is an aldehyde + NAD(+) + H2O = a carboxylate + NADH + 2 H(+). The enzyme catalyses 4-(gamma-L-glutamylamino)butanal + NADP(+) + H2O = 4-(gamma-L-glutamylamino)butanoate + NADPH + 2 H(+). It catalyses the reaction 4-(gamma-L-glutamylamino)butanal + NAD(+) + H2O = 4-(gamma-L-glutamylamino)butanoate + NADH + 2 H(+). It participates in amine and polyamine degradation; putrescine degradation; 4-aminobutanoate from putrescine: step 3/4. With respect to regulation, lithium ions exhibits the highest inhibition (97%). To a lesser extent (5-20%), potassium, sodium, and ammonium ions also inhibit PuuC activity. Transition metals, such as copper and zinc ions inhibit PuuC activity by more than 90%. The presence of heavy metals (mercury, silver) or sodium hydrogensulfite in the reaction mixture completely inactivate PuuC; in contrast, disulfide reductants such as DTT and 2-mercaptoethanol significantly increase its activity by 75% and 27%, respectively. In terms of biological role, catalyzes the oxidation of 3-hydroxypropionaldehyde (3-HPA) to 3-hydroxypropionic acid (3-HP). It acts preferentially with NAD but can also use NADP. 3-HPA appears to be the most suitable substrate for PuuC followed by isovaleraldehyde, propionaldehyde, butyraldehyde, and valeraldehyde. It might play a role in propionate and/or acetic acid metabolisms. Also involved in the breakdown of putrescine through the oxidation of gamma-Glu-gamma-aminobutyraldehyde to gamma-Glu-gamma-aminobutyrate (gamma-Glu-GABA). This chain is NADP/NAD-dependent aldehyde dehydrogenase PuuC, found in Escherichia coli (strain K12).